Consider the following 414-residue polypeptide: Serine hydroxymethyltransferase (414 aa).

(6S)-5,6,7,8-tetrahydrofolate is bound by residues L121 and 125-127; that span reads GHL. An N6-(pyridoxal phosphate)lysine modification is found at K229.

It belongs to the SHMT family. Homodimer. Pyridoxal 5'-phosphate is required as a cofactor.

The protein localises to the cytoplasm. It carries out the reaction (6R)-5,10-methylene-5,6,7,8-tetrahydrofolate + glycine + H2O = (6S)-5,6,7,8-tetrahydrofolate + L-serine. Its pathway is one-carbon metabolism; tetrahydrofolate interconversion. The protein operates within amino-acid biosynthesis; glycine biosynthesis; glycine from L-serine: step 1/1. Functionally, catalyzes the reversible interconversion of serine and glycine with tetrahydrofolate (THF) serving as the one-carbon carrier. This reaction serves as the major source of one-carbon groups required for the biosynthesis of purines, thymidylate, methionine, and other important biomolecules. Also exhibits THF-independent aldolase activity toward beta-hydroxyamino acids, producing glycine and aldehydes, via a retro-aldol mechanism. The protein is Serine hydroxymethyltransferase of Janthinobacterium sp. (strain Marseille) (Minibacterium massiliensis).